The following is an 88-amino-acid chain: uncharacterized protein (88 aa).

This is an uncharacterized protein from Vaccinia virus (strain Copenhagen) (VACV).